The primary structure comprises 239 residues: SH3 domain-binding glutamic acid-rich protein (239 aa).

The short motif at 124–130 (NGIPLPP) is the SH3-binding element. Positions 159–239 (GLAPPPDSKG…GEEPGEDEDS (81 aa)) are disordered. The segment covering 167 to 185 (KGSEKAEEGGETEAQKEGS) has biased composition (basic and acidic residues). The span at 198 to 239 (NEEEGETATEETEEIAMEGAEGEAEEEEETAEGEEPGEDEDS) shows a compositional bias: acidic residues.

This sequence belongs to the SH3BGR family. In terms of tissue distribution, expressed in heart and skeletal muscle.

This Homo sapiens (Human) protein is SH3 domain-binding glutamic acid-rich protein (SH3BGR).